The sequence spans 193 residues: Thioredoxin peroxidase (193 aa).

The Thioredoxin domain occupies 3–161 (AVVGKLAPSF…ALRLLDAFQF (159 aa)). Catalysis depends on C48, which acts as the Cysteine sulfenic acid (-SOH) intermediate.

This sequence belongs to the peroxiredoxin family. AhpC/Prx1 subfamily. Homodimer; disulfide-linked, upon oxidation.

It carries out the reaction a hydroperoxide + [thioredoxin]-dithiol = an alcohol + [thioredoxin]-disulfide + H2O. Thiol-specific peroxidase that catalyzes the reduction of hydrogen peroxide and organic hydroperoxides to water and alcohols, respectively. Plays a role in cell protection against oxidative stress by detoxifying peroxides and as sensor of hydrogen peroxide-mediated signaling events. This Echinococcus granulosus (Hydatid tapeworm) protein is Thioredoxin peroxidase (TPX).